Reading from the N-terminus, the 860-residue chain is MYSGAGPVLASPAPTTSPIPGYAFKPPPRPDFGTTGRTIKLQANFFEMDIPKIDIYHYELDIKPEKCPRRVNREIVEHMVQHFKTQIFGDRKPVFDGRKNLYTAMPLPIGRDKVELEVTLPGEGKDRIFKVSIKWVSCVSLQALHDALSGRLPSVPFETIQALDVVMRHLPSMRYTPVGRSFFTASEGCSNPLGGGREVWFGFHQSVRPSLWKMMLNIDVSATAFYKAQPVIEFVCEVLDFKSIEEQQKPLTDSQRVKFTKEIKGLKVEITHCGQMKRKYRVCNVTRRPASHQTFPLQQESGQTVECTVAQYFKDRHKLVLRYPHLPCLQVGQEQKHTYLPLEVCNIVAGQRCIKKLTDNQTSTMIRATARSAPDRQEEISKLMRSASFNTDPYVREFGIMVKDEMTDVTGRVLQPPSILYGGRNKAIATPVQGVWDMRNKQFHTGIEIKVWAIACFAPQRQCTEVHLKSFTEQLRKISRDAGMPIQGQPCFCKYAQGADSVEPMFRHLKNTYAGLQLVVVILPGKTPVYAEVKRVGDTVLGMATQCVQMKNVQRTTPQTLSNLCLKINVKLGGVNNILLPQGRPPVFQQPVIFLGADVTHPPAGDGKKPSIAAVVGSMDAHPNRYCATVRVQQHRQEIIQDLAAMVRELLIQFYKSTRFKPTRIIFYRDGVSEGQFQQVLHHELLAIREACIKLEKEYQPGITFIVVQKRHHTRLFCTDKNERVGKSGNIPAGTTVDTKITHPTEFDFYLCSHAGIQGTSRPSHYHVLWDDNRFSSDELQILTYQLCHTYVRCTRSVSIPAPAYYAHLVAFRARYHLVDKEHDSAEGSHTSGQSNGRDHQALAKAVQVHQDTLRTMYFA.

Tyrosine 2 is subject to 3'-nitrotyrosine. The PAZ domain maps to 230-349 (PVIEFVCEVL…LPLEVCNIVA (120 aa)). An interaction with guide RNA region spans residues 312-317 (YFKDRH). At serine 388 the chain carries Phosphoserine. The 302-residue stretch at 518–819 (LVVVILPGKT…VAFRARYHLV (302 aa)) folds into the Piwi domain. The interaction with guide RNA stretch occupies residues 525–567 (GKTPVYAEVKRVGDTVLGMATQCVQMKNVQRTTPQTLSNLCLK). Residues 588–591 (FQQP) are interaction with GW182 family members. Aspartate 598 contacts a divalent metal cation. Residues 651–661 (LIQFYKSTRFK) form an interaction with GW182 family members region. Aspartate 670 is an a divalent metal cation binding site. Proline 701 is modified (4-hydroxyproline). 3 interaction with guide RNA regions span residues 710-711 (KR), 754-762 (HAGIQGTSR), and 791-813 (YVRCTRSVSIPAPAYYAHLVAFR). Histidine 808 contacts a divalent metal cation. Residues serine 825, serine 829, serine 832, and serine 835 each carry the phosphoserine modification.

This sequence belongs to the argonaute family. Ago subfamily. In terms of assembly, interacts with DICER1 through its Piwi domain and with TARBP2 during assembly of the RNA-induced silencing complex (RISC). Together, DICER1, AGO2 and TARBP2 constitute the trimeric RISC loading complex (RLC), or micro-RNA (miRNA) loading complex (miRLC). Within the RLC/miRLC, DICER1 and TARBP2 are required to process precursor miRNAs (pre-miRNAs) to mature miRNAs and then load them onto AGO2. AGO2 bound to the mature miRNA constitutes the minimal RISC and may subsequently dissociate from DICER1 and TARBP2. Note however that the term RISC has also been used to describe the trimeric RLC/miRLC. The formation of RISC complexes containing siRNAs rather than miRNAs appears to occur independently of DICER1. Interacts with AGO1. Also interacts with DDB1, DDX5, DDX6, DDX20, DHX30, DHX36, DDX47, DHX9, ELAVL, FXR1, GEMIN4, HNRNPF, IGF2BP1, ILF3, IMP8, MATR3, PABPC1, PRMT5, P4HA1, P4HB, RBM4, SART3, TNRC6A, TNRC6B, UPF1 and YBX1. Interacts with the P-body components DCP1A and XRN1. Associates with polysomes and messenger ribonucleoproteins (mNRPs). Interacts with RBM4; the interaction is modulated under stress-induced conditions, occurs under both cell proliferation and differentiation conditions and in an RNA- and phosphorylation-independent manner. Interacts with LIMD1, WTIP and AJUBA. Interacts with TRIM71; the interaction increases in presence of RNA. Interacts with APOBEC3G in an RNA-dependent manner. Interacts with APOBEC3A, APOBEC3C, APOBEC3F and APOBEC3H. Interacts with DICER1, TARBP2, EIF6, MOV10 and RPL7A (60S ribosome subunit); they form a large RNA-induced silencing complex (RISC). Interacts with FMR1. Interacts with ZFP36. Interacts with RC3H1; the interaction is RNA independent. Found in a complex, composed of AGO2, CHD7 and ARB2A. Interacts with SND1 and SYT11. Interacts with CLNK. Interacts with GARRE1. Interacts with GRB2; this interaction is important for the formation of a ternary complex containing GRB2, AGO2 and DICER1. Requires Mg(2+) as cofactor. Mn(2+) is required as a cofactor. Post-translationally, hydroxylated. 4-hydroxylation appears to enhance protein stability but is not required for miRNA-binding or endonuclease activity. Ubiquitinated on surface-exposed lysines by a SCF-like E3 ubiquitin-protein ligase complex containing ZSWIM8 during target-directed microRNA degradation (TDMD), a process that mediates degradation of microRNAs (miRNAs). Ubiquitination by the SCF-like E3 ubiquitin-protein ligase complex containing ZSWIM8 leads to its subsequent degradation, thereby exposing miRNAs for degradation. ZSWIM8 recognizes and binds AGO2 when it is engaged with a TDMD target. In terms of processing, phosphorylation at Ser-388 by AKT3; leads to up-regulate translational repression of microRNA target and down-regulate endonucleolytic cleavage. Post-translationally, a phosphorylation cycle of C-terminal serine cluster (Ser-825-Ser-835) regulates the release of target mRNAs. Target-binding leads to phosphorylation of these residues by CSNK1A1, which reduces the affinity of AGO2 for mRNA and enables target release. The ANKRD52-PPP6C phosphatase complex dephosphorylates the residues, which primes AGO2 for binding a new target.

Its subcellular location is the cytoplasm. The protein localises to the P-body. The protein resides in the nucleus. The enzyme catalyses Endonucleolytic cleavage to 5'-phosphomonoester.. Its function is as follows. Required for RNA-mediated gene silencing (RNAi) by the RNA-induced silencing complex (RISC). The 'minimal RISC' appears to include AGO2 bound to a short guide RNA such as a microRNA (miRNA) or short interfering RNA (siRNA). These guide RNAs direct RISC to complementary mRNAs that are targets for RISC-mediated gene silencing. The precise mechanism of gene silencing depends on the degree of complementarity between the miRNA or siRNA and its target. Binding of RISC to a perfectly complementary mRNA generally results in silencing due to endonucleolytic cleavage of the mRNA specifically by AGO2. Binding of RISC to a partially complementary mRNA results in silencing through inhibition of translation, and this is independent of endonuclease activity. May inhibit translation initiation by binding to the 7-methylguanosine cap, thereby preventing the recruitment of the translation initiation factor eIF4-E. May also inhibit translation initiation via interaction with EIF6, which itself binds to the 60S ribosomal subunit and prevents its association with the 40S ribosomal subunit. The inhibition of translational initiation leads to the accumulation of the affected mRNA in cytoplasmic processing bodies (P-bodies), where mRNA degradation may subsequently occur. In some cases RISC-mediated translational repression is also observed for miRNAs that perfectly match the 3' untranslated region (3'-UTR). Can also up-regulate the translation of specific mRNAs under certain growth conditions. Binds to the AU element of the 3'-UTR of the TNF (TNF-alpha) mRNA and up-regulates translation under conditions of serum starvation. Also required for transcriptional gene silencing (TGS), in which short RNAs known as antigene RNAs or agRNAs direct the transcriptional repression of complementary promoter regions. This chain is Protein argonaute-2 (Ago2), found in Rattus norvegicus (Rat).